The chain runs to 383 residues: Beta-1,3-galactosyltransferase 4 (383 aa).

The Cytoplasmic segment spans residues 1–8 (MPLSLFRR). A helical transmembrane segment spans residues 9–29 (LLLAALLLVIIWTLFGPSGIG). The Lumenal segment spans residues 30–383 (EELLSLSLAS…RCRVIAWLHS (354 aa)). The N-linked (GlcNAc...) asparagine glycan is linked to N149.

This sequence belongs to the glycosyltransferase 31 family.

It is found in the golgi apparatus membrane. It catalyses the reaction a ganglioside GM2 (d18:1(4E)) + UDP-alpha-D-galactose = a ganglioside GM1 (d18:1(4E)) + UDP + H(+). It carries out the reaction a ganglioside GM2 + UDP-alpha-D-galactose = a ganglioside GM1 + UDP + H(+). The catalysed reaction is a ganglioside GD2 (d18:1(4E)) + UDP-alpha-D-galactose = a ganglioside GD1b (d18:1(4E)) + UDP + H(+). The enzyme catalyses a ganglioside GA2 (d18:1(4E)) + UDP-alpha-D-galactose = a ganglioside GA1 (d18:1(4E)) + UDP + H(+). Its pathway is protein modification; protein glycosylation. Functionally, involved in GM1/GD1B/GA1 ganglioside biosynthesis. The polypeptide is Beta-1,3-galactosyltransferase 4 (B3GALT4) (Canis lupus familiaris (Dog)).